Reading from the N-terminus, the 160-residue chain is Transcription antitermination protein NusB (160 aa).

It belongs to the NusB family.

In terms of biological role, involved in transcription antitermination. Required for transcription of ribosomal RNA (rRNA) genes. Binds specifically to the boxA antiterminator sequence of the ribosomal RNA (rrn) operons. This is Transcription antitermination protein NusB from Gluconobacter oxydans (strain 621H) (Gluconobacter suboxydans).